Consider the following 382-residue polypeptide: Sphingoid long-chain base transporter RSB1 (382 aa).

Residues Met1–Arg34 are Extracellular-facing. 2 N-linked (GlcNAc...) asparagine glycosylation sites follow: Asn3 and Asn6. A helical membrane pass occupies residues Phe35–Leu55. Residues Met56–Arg57 are Cytoplasmic-facing. Residues Gln58 to Gly78 form a helical membrane-spanning segment. Residues Arg79–Asp90 lie on the Extracellular side of the membrane. The chain crosses the membrane as a helical span at residues Ala91–Tyr111. The Cytoplasmic segment spans residues Tyr112–Ser135. Residues Phe136–Cys156 traverse the membrane as a helical segment. The Extracellular segment spans residues Gly157–His171. The helical transmembrane segment at Val172–Phe192 threads the bilayer. Residues His193–Arg241 lie on the Cytoplasmic side of the membrane. The chain crosses the membrane as a helical span at residues Trp242–Cys262. Residues Cys263–Glu281 are Extracellular-facing. A helical transmembrane segment spans residues Trp282 to Phe302. Over His303–Leu382 the chain is Cytoplasmic.

This sequence belongs to the lipid-translocating exporter (LTE) (TC 9.A.26.1) family.

The protein localises to the cell membrane. Catalyzes the ATP-dependent translocation of sphingoid long-chain bases (LCBs) from the cytoplasmic site toward the extracytoplasmic side of the membrane (flip-flop). Involved in the establishment of the functional lipid asymmetry of the plasma membrane. Regulates intracellular levels of LCBs, sphingolipid precursors that are growth inhibitory at increased levels. This is Sphingoid long-chain base transporter RSB1 (RSB1) from Saccharomyces cerevisiae (strain AWRI1631) (Baker's yeast).